Reading from the N-terminus, the 125-residue chain is Fluoride-specific ion channel FluC (125 aa).

4 helical membrane passes run 5–25 (FVFIALAGALGTLARYSLAGF), 33–53 (FFPFGTLVVNITGCFAAGFLW), 69–89 (FVLVGFMGAFTTFSAFILETG), and 101–121 (IVNLLLQNSLGFGALMAGIVL). Residues Gly-76 and Thr-79 each coordinate Na(+).

Belongs to the fluoride channel Fluc/FEX (TC 1.A.43) family.

It localises to the cell inner membrane. The catalysed reaction is fluoride(in) = fluoride(out). Its activity is regulated as follows. Na(+) is not transported, but it plays an essential structural role and its presence is essential for fluoride channel function. Its function is as follows. Fluoride-specific ion channel. Important for reducing fluoride concentration in the cell, thus reducing its toxicity. The sequence is that of Fluoride-specific ion channel FluC from Desulforapulum autotrophicum (strain ATCC 43914 / DSM 3382 / VKM B-1955 / HRM2) (Desulfobacterium autotrophicum).